Consider the following 165-residue polypeptide: Protein SprT (165 aa).

Residues L22–V163 enclose the SprT-like domain. H78 serves as a coordination point for Zn(2+). The active site involves E79. H82 provides a ligand contact to Zn(2+).

It belongs to the SprT family. The cofactor is Zn(2+).

The protein localises to the cytoplasm. This chain is Protein SprT, found in Salmonella paratyphi C (strain RKS4594).